A 436-amino-acid polypeptide reads, in one-letter code: L-threonine dehydratase biosynthetic IlvA (436 aa).

The tract at residues 1–357 (MSETYVSEKS…HRGLKHYFLV (357 aa)) is catalytic. Lys70 is subject to N6-(pyridoxal phosphate)lysine. Residues Asn97, 203 to 207 (GGGGL), and Ser329 contribute to the pyridoxal 5'-phosphate site. The region spanning 353–427 (HYFLVNFPQK…SAIDSRRLEP (75 aa)) is the ACT-like domain. A regulatory region spans residues 358–436 (NFPQKPGQLR…PGTPEYEYLT (79 aa)).

This sequence belongs to the serine/threonine dehydratase family. Homotetramer. It depends on pyridoxal 5'-phosphate as a cofactor.

The enzyme catalyses L-threonine = 2-oxobutanoate + NH4(+). The protein operates within amino-acid biosynthesis; L-isoleucine biosynthesis; 2-oxobutanoate from L-threonine: step 1/1. Catalyzes the anaerobic formation of alpha-ketobutyrate and ammonia from threonine in a two-step reaction. The first step involved a dehydration of threonine and a production of enamine intermediates (aminocrotonate), which tautomerizes to its imine form (iminobutyrate). Both intermediates are unstable and short-lived. The second step is the nonenzymatic hydrolysis of the enamine/imine intermediates to form 2-ketobutyrate and free ammonia. In the low water environment of the cell, the second step is accelerated by RidA. The polypeptide is L-threonine dehydratase biosynthetic IlvA (ilvA) (Corynebacterium glutamicum (strain ATCC 13032 / DSM 20300 / JCM 1318 / BCRC 11384 / CCUG 27702 / LMG 3730 / NBRC 12168 / NCIMB 10025 / NRRL B-2784 / 534)).